Reading from the N-terminus, the 367-residue chain is UDP-N-acetylglucosamine--N-acetylmuramyl-(pentapeptide) pyrophosphoryl-undecaprenol N-acetylglucosamine transferase (367 aa).

UDP-N-acetyl-alpha-D-glucosamine-binding positions include 15 to 17, Asn127, Arg163, Ser191, Ile249, and Gln294; that span reads TGG.

This sequence belongs to the glycosyltransferase 28 family. MurG subfamily.

It is found in the cell inner membrane. The catalysed reaction is di-trans,octa-cis-undecaprenyl diphospho-N-acetyl-alpha-D-muramoyl-L-alanyl-D-glutamyl-meso-2,6-diaminopimeloyl-D-alanyl-D-alanine + UDP-N-acetyl-alpha-D-glucosamine = di-trans,octa-cis-undecaprenyl diphospho-[N-acetyl-alpha-D-glucosaminyl-(1-&gt;4)]-N-acetyl-alpha-D-muramoyl-L-alanyl-D-glutamyl-meso-2,6-diaminopimeloyl-D-alanyl-D-alanine + UDP + H(+). The protein operates within cell wall biogenesis; peptidoglycan biosynthesis. Its function is as follows. Cell wall formation. Catalyzes the transfer of a GlcNAc subunit on undecaprenyl-pyrophosphoryl-MurNAc-pentapeptide (lipid intermediate I) to form undecaprenyl-pyrophosphoryl-MurNAc-(pentapeptide)GlcNAc (lipid intermediate II). The polypeptide is UDP-N-acetylglucosamine--N-acetylmuramyl-(pentapeptide) pyrophosphoryl-undecaprenol N-acetylglucosamine transferase (Burkholderia cenocepacia (strain HI2424)).